The sequence spans 130 residues: Osteocrin (130 aa).

A signal peptide spans 1-25; that stretch reads MLDWRLASTHFILAMIVMLWGSGKA. Position 129 is an arginine amide (R129).

It belongs to the Osteocrin family. As to quaternary structure, interacts with NPR3. In terms of tissue distribution, expressed in skeletal muscle and to a much lesser extent in bone, brown adipose tissue, spleen and testis. Not expressed in neurons.

Its subcellular location is the secreted. In terms of biological role, hormone that acts as a ligand for natriuretic peptide receptor NPR3/NPR-C and promotes bone growth and physical endurance in muscle. Acts as a regulator of osteoblast differentiation and bone growth by binding to natriuretic peptide receptor NPR3/NPR-C, thereby preventing binding between NPR3/NPR-C and natriuretic peptides, leading to increase cGMP production. Required to enhance physical endurance: induced following physical exercise in muscle and promotes cGMP production, probably by interacting with NPR3/NPR-C. May act as an autocrine and paracrine factor linked to glucose metabolism in skeletal muscle. This is Osteocrin from Mus musculus (Mouse).